Reading from the N-terminus, the 228-residue chain is Probable septum site-determining protein MinC (228 aa).

It belongs to the MinC family. Interacts with MinD and FtsZ.

Functionally, cell division inhibitor that blocks the formation of polar Z ring septums. Rapidly oscillates between the poles of the cell to destabilize FtsZ filaments that have formed before they mature into polar Z rings. Prevents FtsZ polymerization. The chain is Probable septum site-determining protein MinC from Bacillus cereus (strain G9842).